The primary structure comprises 358 residues: Forkhead box protein I1c (358 aa).

The segment covering 1 to 13 (MNSIHLPSHQRTS) has biased composition (polar residues). 2 disordered regions span residues 1-25 (MNSI…PKGA) and 191-255 (DNGN…PSGI). Residues 106 to 200 (RPPYSYSALI…DNGNFRRKRK (95 aa)) constitute a DNA-binding region (fork-head).

The protein resides in the nucleus. Functionally, probable transcription factor. The protein is Forkhead box protein I1c of Xenopus tropicalis (Western clawed frog).